The chain runs to 200 residues: dTTP/UTP pyrophosphatase (200 aa).

Asp-73 functions as the Proton acceptor in the catalytic mechanism.

The protein belongs to the Maf family. YhdE subfamily. A divalent metal cation serves as cofactor.

It localises to the cytoplasm. The catalysed reaction is dTTP + H2O = dTMP + diphosphate + H(+). It catalyses the reaction UTP + H2O = UMP + diphosphate + H(+). Nucleoside triphosphate pyrophosphatase that hydrolyzes dTTP and UTP. May have a dual role in cell division arrest and in preventing the incorporation of modified nucleotides into cellular nucleic acids. In Chromohalobacter salexigens (strain ATCC BAA-138 / DSM 3043 / CIP 106854 / NCIMB 13768 / 1H11), this protein is dTTP/UTP pyrophosphatase.